Consider the following 313-residue polypeptide: Intelectin-1a (313 aa).

Residues 1–18 (MTQLGFLLFIMVATRGCS) form the signal peptide. One can recognise a Fibrinogen C-terminal domain in the interval 32-251 (SFFSSLPRSC…NNERAASALC (220 aa)). Cys-41 and Cys-70 are oxidised to a cystine. 7 residues coordinate Ca(2+): His-86, Glu-87, Asn-89, Gly-92, Gly-97, Asp-98, and Asp-133. 3 disulfides stabilise this stretch: Cys-94/Cys-280, Cys-199/Cys-259, and Cys-251/Cys-265. The Ca(2+) site is built by Asn-260, Glu-262, Glu-274, and Asp-282. A carbohydrate is bound by residues 262-263 (EH) and Glu-274. Ser-298 carries the GPI-anchor amidated serine lipid modification. The propeptide occupies 299–313 (SSRKITEAAVLLFYR).

In terms of assembly, monomer. May interact with LTF. In terms of tissue distribution, expressed in small intestinal Paneth cells in uninfected mice. Expression also detected in various other tissues including stomach, kidney, ovary and brain.

Its subcellular location is the cell membrane. The protein localises to the secreted. Its function is as follows. Lectin that specifically recognizes microbial carbohydrate chains in a calcium-dependent manner. Binds to microbial glycans that contain a terminal acyclic 1,2-diol moiety, including beta-linked D-galactofuranose (beta-Galf), D-phosphoglycerol-modified glycans, D-glycero-D-talo-oct-2-ulosonic acid (KO) and 3-deoxy-D-manno-oct-2-ulosonic acid (KDO). Binds to glycans from Gram-positive and Gram-negative bacteria, including K.pneumoniae, S.pneumoniae, Y.pestis, P.mirabilis and P.vulgaris. Does not bind mammalian glycans. Probably plays a role in the defense system against microorganisms. May function as adipokine that has no effect on basal glucose uptake but enhances insulin-stimulated glucose uptake in adipocytes. Increases AKT phosphorylation in the absence and presence of insulin. May interact with lactoferrin/LTF and increase its uptake, and may thereby play a role in iron absorption. The sequence is that of Intelectin-1a (Itln1) from Mus musculus (Mouse).